Reading from the N-terminus, the 126-residue chain is Penton protein P31 (126 aa).

The protein localises to the virion. In terms of biological role, in association with P2 and trimeric P5, forms the spike complexes located at the 5-fold vertices of the capsid. Essential for viral infectivity. The protein is Penton protein P31 (XXXI) of Acinetobacter calcoaceticus (Arthrobacter siderocapsulatus).